Consider the following 589-residue polypeptide: Cysteine/serine-rich nuclear protein 1 (589 aa).

2 disordered regions span residues Met-1 to Cys-62 and Phe-309 to Asp-388. Composition is skewed to low complexity over residues Ser-17–Arg-41 and Asp-345–Ala-368.

It belongs to the AXUD1 family. As to expression, ubiquitous. Most abundantly expressed in lung, placenta, skeletal muscle, pancreas and leukocyte. Frequently down-regulated in lung, kidney, liver and colon cancers compared with their corresponding normal tissues.

It is found in the nucleus. In terms of biological role, binds to the consensus sequence 5'-AGAGTG-3' and has transcriptional activator activity. May have a tumor-suppressor function. May play a role in apoptosis. The sequence is that of Cysteine/serine-rich nuclear protein 1 (CSRNP1) from Homo sapiens (Human).